The sequence spans 1105 residues: Tubulin-folding cofactor D (1105 aa).

N122 and N126 each carry an N-linked (GlcNAc...) asparagine glycan. HEAT repeat units lie at residues 308–345 (IYLE…RLPW), 347–385 (LAEQ…WHGA), 401–446 (SKCL…CYSK), and 452–489 (LQTN…RHAS). A glycan (N-linked (GlcNAc...) asparagine) is linked at N373. N-linked (GlcNAc...) asparagine glycans are attached at residues N721, N883, and N1083.

As to quaternary structure, interacts with alp21.

Its subcellular location is the cytoplasm. It is found in the cytoskeleton. Has a function in the folding of beta-tubulin. Microtubule-associated protein that is essential to direct polarized cell growth and to position the nucleus and septum to the center of the cell during mitosis. This chain is Tubulin-folding cofactor D (alp1), found in Schizosaccharomyces pombe (strain 972 / ATCC 24843) (Fission yeast).